Here is a 230-residue protein sequence, read N- to C-terminus: uncharacterized protein (230 aa).

6 consecutive transmembrane segments (helical) span residues 4 to 24 (ACIAIIIILLTVAAYLAMVKL), 30 to 50 (LPFLIPVLTTTILIVAALMMF), 67 to 87 (LLGPAVVALAYPLYKQWHIIV), 91 to 111 (VPILGGVLVGLCMGMISGLIF), 148 to 168 (MTVVFVMIAGFSGVILGPLFL), and 210 to 230 (MTLCAVLGSFFGPLVVWLFHI).

This sequence belongs to the YohK (E.coli)/YwbG (IPA-22R) (B.subtilis) family.

It localises to the cell membrane. This is an uncharacterized protein from Bacillus subtilis (strain 168).